The chain runs to 1109 residues: MILKFIIQQCVFKVAKIFSDNLIQIFMDISSVYSSSTLFFSKLSLLMCKVFNSKCAGISVLNKDGLFDTIAFCSSTQELENFSYSLKKISKNITYYDNINEIFNNSEIIKKYNLKSYMEIPLKDSKEFYFGDIVLFGDQTLNPNILDTNILTFITNRTSMEFEKKKVSDQLIIAKNLLDQSPSCSCLVSRNGKIIRKIGAFYERLLGLEIGENISSVEKSSDISTILKQVCFENNNLSTETTITKKNGEKYPAEVFVKEISDIHSNSIGIMIIVRDITDQIRLKEMNIELQKKSELEQKRNQELMEARDLALTATKIKSQFLATISHEIRTPLNGIITMGEMLLSTSPLNTEQHDIAETIFGSSELLLSITSDILDFSKIEASKLELEMIEFDFIGCLEGIGKTIGVSITNKPIEIAFLMDTDIPHRLIGDPNRLIQIMLNMGTNAVKYTDRGHIVFRISVISREQNRCKIKISIDDSGIGIGEDQRAHLFEPFHQIDSSSTRKYGGSGLGLAISSKLAKLMGGEVILERSKPGVGSLFSVTLNFEQIGSNTLKSLLPDKSFSRNKTCIILDNYEYTASIASQRFDQIFEESNIILVKESTVKKFFELVQEYKINGDVNKIDLKNLDPELLPFFDSSLICIIVFHRFMDNLDIFLKYVKDFIEFYKKKIVVALGINHKNFKNLPKRRDFLIFKKPISSTNLIKVSNMARKIIPKSSSSSNLIQTISQIDNQQQQQQQQLQQQEQEQQHQQQQLQQEQQFVTISPHSDSSEKKTTPKKDRGKYDFNISPLRIDRFGTESTSSPKIKLYSDTSSDSGESDEFEFSENLRELKSDGELVVLKNQPYKEQRLSNIQLINDPIVTPPTPKANSEVVSTKAESTFFQSSSITIKETRSDSVNSVNSVNSVNSVNSLNSENSNNSLDVGIRTRPRILLVDDNAVNRKVVKLQLKKLGYDCDTATNGFEGFEMQKKDNYELIFMDLNMPLCDGSMASKLIRSHEELNNYKSRANIVGLSATYLHGSKDYCVSMGMDDFVVKPLKLQPLGELVKKYLEVENNNNNNNNNNNNNNNNNSNNNNSNSNSNPNSNSNSNSNSNSNPNQNPNYCNNLPTDFI.

A PAC domain is found at 237–289 (LSTETTITKKNGEKYPAEVFVKEISDIHSNSIGIMIIVRDITDQIRLKEMNIE). The Histidine kinase domain maps to 324-547 (TISHEIRTPL…LFSVTLNFEQ (224 aa)). Position 327 is a phosphohistidine; by autocatalysis (H327). A coiled-coil region spans residues 719 to 760 (SNLIQTISQIDNQQQQQQQQLQQQEQEQQHQQQQLQQEQQFV). A compositionally biased stretch (low complexity) spans 739–758 (LQQQEQEQQHQQQQLQQEQQ). Residues 739–819 (LQQQEQEQQH…TSSDSGESDE (81 aa)) form a disordered region. The span at 767–782 (DSSEKKTTPKKDRGKY) shows a compositional bias: basic and acidic residues. One can recognise a Response regulatory domain in the interval 928–1048 (RILLVDDNAV…PLGELVKKYL (121 aa)). A 4-aspartylphosphate modification is found at D977. Positions 1052–1099 (NNNNNNNNNNNNNNNNNSNNNNSNSNSNPNSNSNSNSNSNSNPNQNPN) are enriched in low complexity. The interval 1052-1109 (NNNNNNNNNNNNNNNNNSNNNNSNSNSNPNSNSNSNSNSNSNPNQNPNYCNNLPTDFI) is disordered. Positions 1100 to 1109 (YCNNLPTDFI) are enriched in polar residues.

The enzyme catalyses ATP + protein L-histidine = ADP + protein N-phospho-L-histidine.. Its function is as follows. Acts as a receptor histidine kinase for a signal transduction pathway. This protein undergoes an ATP-dependent autophosphorylation at a conserved histidine residue in the kinase core, and a phosphoryl group is then transferred to a conserved aspartate residue in the receiver domain. This is Hybrid signal transduction histidine kinase F (dhkF) from Dictyostelium discoideum (Social amoeba).